A 194-amino-acid chain; its full sequence is Putative 3-methyladenine DNA glycosylase (194 aa).

It belongs to the DNA glycosylase MPG family.

This Mycolicibacterium fortuitum (Mycobacterium fortuitum) protein is Putative 3-methyladenine DNA glycosylase.